The sequence spans 660 residues: Squalene--hopene cyclase (660 aa).

Residues 73-114 form a PFTB 1 repeat; that stretch reads EAKIGNYLRRVQGAHGGWPLVHDGEFDMSASVKAYFALKMIG. The active-site Proton donor is Asp394. PFTB repeat units follow at residues 419–460 and 536–586; these read IDRG…GALL and IRKA…ALMA.

Belongs to the terpene cyclase/mutase family.

It is found in the cell membrane. The catalysed reaction is squalene = hop-22(29)-ene. It catalyses the reaction squalene + H2O = hopan-22-ol. It functions in the pathway secondary metabolite biosynthesis; hopanoid biosynthesis. Catalyzes the cyclization of squalene into hopene. This Bradyrhizobium diazoefficiens (strain JCM 10833 / BCRC 13528 / IAM 13628 / NBRC 14792 / USDA 110) protein is Squalene--hopene cyclase (shc).